A 142-amino-acid chain; its full sequence is Hemoglobin subunit alpha-2 (142 aa).

In terms of domain architecture, Globin spans 2–142 (VLSAADKSNI…VSTVLTSKYR (141 aa)). H59 provides a ligand contact to O2. Position 88 (H88) interacts with heme b.

This sequence belongs to the globin family. Heterotetramer of two alpha chains and two beta chains. In terms of tissue distribution, red blood cells.

Functionally, involved in oxygen transport from the lung to the various peripheral tissues. In Bubalus bubalis (Domestic water buffalo), this protein is Hemoglobin subunit alpha-2.